A 365-amino-acid polypeptide reads, in one-letter code: Caffeic acid 3-O-methyltransferase 1 (365 aa).

A substrate-binding site is contributed by 130–136 (MNQDKVL). Positions 162–180 (AFEYHGTDPRFNKVFNKGM) are substrate binding. S-adenosyl-L-methionine-binding residues include glycine 208, aspartate 231, aspartate 251, methionine 252, and lysine 265. Histidine 269 acts as the Proton acceptor in catalysis.

Belongs to the class I-like SAM-binding methyltransferase superfamily. Cation-independent O-methyltransferase family. COMT subfamily. In terms of assembly, homodimer.

The enzyme catalyses (E)-caffeate + S-adenosyl-L-methionine = (E)-ferulate + S-adenosyl-L-homocysteine + H(+). The protein operates within aromatic compound metabolism; phenylpropanoid biosynthesis. Catalyzes the conversion of caffeic acid to ferulic acid and of 5-hydroxyferulic acid to sinapic acid. The resulting products may subsequently be converted to the corresponding alcohols that are incorporated into lignins. This chain is Caffeic acid 3-O-methyltransferase 1 (HOMT1), found in Populus kitakamiensis (Aspen).